The primary structure comprises 634 residues: DNA gyrase subunit B (634 aa).

The Toprim domain maps to 416–530 (REIYIVEGDS…NGHVYIAMPP (115 aa)). Residues E422, D495, and D497 each contribute to the Mg(2+) site.

It belongs to the type II topoisomerase GyrB family. As to quaternary structure, heterotetramer, composed of two GyrA and two GyrB chains. In the heterotetramer, GyrA contains the active site tyrosine that forms a transient covalent intermediate with DNA, while GyrB binds cofactors and catalyzes ATP hydrolysis. It depends on Mg(2+) as a cofactor. The cofactor is Mn(2+). Requires Ca(2+) as cofactor.

It is found in the cytoplasm. It catalyses the reaction ATP-dependent breakage, passage and rejoining of double-stranded DNA.. Functionally, a type II topoisomerase that negatively supercoils closed circular double-stranded (ds) DNA in an ATP-dependent manner to modulate DNA topology and maintain chromosomes in an underwound state. Negative supercoiling favors strand separation, and DNA replication, transcription, recombination and repair, all of which involve strand separation. Also able to catalyze the interconversion of other topological isomers of dsDNA rings, including catenanes and knotted rings. Type II topoisomerases break and join 2 DNA strands simultaneously in an ATP-dependent manner. The protein is DNA gyrase subunit B of Borrelia hermsii.